The chain runs to 66 residues: Probable cytochrome b-c1 complex subunit 9 (66 aa).

At 1 to 20 (MSNALTNIFYKYVARRNSTW) the chain is on the mitochondrial matrix side. Residues 21 to 46 (MAGAILGAFVLDSTVSGAVNTFFDSV) form a helical membrane-spanning segment. The Mitochondrial intermembrane segment spans residues 47–66 (NKGKLWKDVYAERVKKGISQ).

Belongs to the UQCR10/QCR9 family. As to quaternary structure, component of the ubiquinol-cytochrome c oxidoreductase (cytochrome b-c1 complex, complex III, CIII), a multisubunit enzyme composed of 3 respiratory subunits cytochrome b, cytochrome c1 and Rieske protein, 2 core protein subunits, and additional low-molecular weight protein subunits. The complex exists as an obligatory dimer and forms supercomplexes (SCs) in the inner mitochondrial membrane with cytochrome c oxidase (complex IV, CIV).

The protein localises to the mitochondrion inner membrane. Component of the ubiquinol-cytochrome c oxidoreductase, a multisubunit transmembrane complex that is part of the mitochondrial electron transport chain which drives oxidative phosphorylation. The respiratory chain contains 3 multisubunit complexes succinate dehydrogenase (complex II, CII), ubiquinol-cytochrome c oxidoreductase (cytochrome b-c1 complex, complex III, CIII) and cytochrome c oxidase (complex IV, CIV), that cooperate to transfer electrons derived from NADH and succinate to molecular oxygen, creating an electrochemical gradient over the inner membrane that drives transmembrane transport and the ATP synthase. The cytochrome b-c1 complex catalyzes electron transfer from ubiquinol to cytochrome c, linking this redox reaction to translocation of protons across the mitochondrial inner membrane, with protons being carried across the membrane as hydrogens on the quinol. In the process called Q cycle, 2 protons are consumed from the matrix, 4 protons are released into the intermembrane space and 2 electrons are passed to cytochrome c. The sequence is that of Probable cytochrome b-c1 complex subunit 9 from Dictyostelium discoideum (Social amoeba).